An 861-amino-acid polypeptide reads, in one-letter code: Alpha-actinin A (861 aa).

The interval 1–239 is actin-binding; that stretch reads MSEEPTPVSG…VMTYVAQYYH (239 aa). Calponin-homology (CH) domains are found at residues 22–127 and 136–242; these read ITQK…LRFA and LSAK…HHFS. 4 Spectrin repeats span residues 240–365, 366–480, 481–601, and 602–714; these read HFSA…ALEK, AEQE…TGVK, SSAE…EERK, and VQLA…EQVV. 2 consecutive EF-hand domains span residues 729-764 and 765-800; these read EELSEFKACFSHFDKDNDNKLNRLEFSSCLKSIGDE and LTEEQLNQVISKIDTDGNGTISFEEFIDYMVSSRKG. Positions 742, 744, 746, 748, 753, 778, 780, 782, 784, and 789 each coordinate Ca(2+).

Belongs to the alpha-actinin family. Homodimer; antiparallel.

It localises to the cytoplasm. Its subcellular location is the cell cortex. The protein localises to the contractile vacuole. The protein resides in the cytoplasmic vesicle. It is found in the phagosome. Its function is as follows. F-actin cross-linking protein which is thought to anchor actin to a variety of intracellular structures. This is a bundling protein. Increases the actin-stimulated ATPase activity of myosin. Involved in vegetative cell growth, phagocytosis, motility and development, probably through stabilization of the actin network in the cortical cytoskeleton. This chain is Alpha-actinin A (abpA), found in Dictyostelium discoideum (Social amoeba).